The chain runs to 222 residues: FCS-Like Zinc finger 13 (222 aa).

The FLZ-type zinc finger occupies 149–192 (EFLSSCCLCKKKLQGKDIYMYKGEMGFCSAECRSVQIMNDERQE).

It belongs to the FLZ family. Interacts with KIN10 and KIN11 via its FLZ-type zinc finger domain. Interacts with KINB1, KINB2, KINB3 and SNF4 via its N-terminal part.

Its subcellular location is the nucleus. The protein resides in the cytoplasm. Its function is as follows. May act as an adapter to facilitate the interaction of SnRK1 complex with effector proteins, conferring tissue- and stimulus-type specific differences in the SnRK1 regulation pathway. In Arabidopsis thaliana (Mouse-ear cress), this protein is FCS-Like Zinc finger 13.